A 393-amino-acid chain; its full sequence is Phospho-N-acetylmuramoyl-pentapeptide-transferase (393 aa).

10 consecutive transmembrane segments (helical) span residues 29-49 (RAVMSAMTALLLGLVFGPWVI), 75-95 (TPTMGGVLILLSIAVSTLLWF), 101-121 (FVWVVMLVTFGFGAIGWVDDW), 138-158 (YLWQSLIGLVAAIYLAFSVSE), 194-214 (VSYPLGVFGFIFLTYFVIVGA), 226-246 (GLAIMPVVLVGSALGLFAYVT), 263-283 (AGELLIFCAAMAGAGLAFLWF), 290-310 (VFMGDVGALALGGALGTIAVI), 315-335 (IVLGIMGGIFVVEALSVMAQV), and 370-390 (QVVVRFWIITMLLCLVGLSTL).

The protein belongs to the glycosyltransferase 4 family. MraY subfamily. The cofactor is Mg(2+).

It localises to the cell inner membrane. The enzyme catalyses UDP-N-acetyl-alpha-D-muramoyl-L-alanyl-gamma-D-glutamyl-meso-2,6-diaminopimeloyl-D-alanyl-D-alanine + di-trans,octa-cis-undecaprenyl phosphate = di-trans,octa-cis-undecaprenyl diphospho-N-acetyl-alpha-D-muramoyl-L-alanyl-D-glutamyl-meso-2,6-diaminopimeloyl-D-alanyl-D-alanine + UMP. The protein operates within cell wall biogenesis; peptidoglycan biosynthesis. Its function is as follows. Catalyzes the initial step of the lipid cycle reactions in the biosynthesis of the cell wall peptidoglycan: transfers peptidoglycan precursor phospho-MurNAc-pentapeptide from UDP-MurNAc-pentapeptide onto the lipid carrier undecaprenyl phosphate, yielding undecaprenyl-pyrophosphoryl-MurNAc-pentapeptide, known as lipid I. In Leptothrix cholodnii (strain ATCC 51168 / LMG 8142 / SP-6) (Leptothrix discophora (strain SP-6)), this protein is Phospho-N-acetylmuramoyl-pentapeptide-transferase.